Consider the following 93-residue polypeptide: UPF0358 protein lmo1070 (93 aa).

This sequence belongs to the UPF0358 family.

This Listeria monocytogenes serovar 1/2a (strain ATCC BAA-679 / EGD-e) protein is UPF0358 protein lmo1070.